A 523-amino-acid chain; its full sequence is 2-isopropylmalate synthase (523 aa).

The Pyruvate carboxyltransferase domain occupies 5–267; it reads VIIFDTTLRD…ETGINAKEIH (263 aa). The Mn(2+) site is built by Asp-14, His-202, His-204, and Asn-238. Residues 392–523 form a regulatory domain region; that stretch reads QLKQLVVHSD…QQKARSLGGV (132 aa).

The protein belongs to the alpha-IPM synthase/homocitrate synthase family. LeuA type 1 subfamily. As to quaternary structure, homodimer. Mn(2+) serves as cofactor.

The protein localises to the cytoplasm. The enzyme catalyses 3-methyl-2-oxobutanoate + acetyl-CoA + H2O = (2S)-2-isopropylmalate + CoA + H(+). Its pathway is amino-acid biosynthesis; L-leucine biosynthesis; L-leucine from 3-methyl-2-oxobutanoate: step 1/4. Its function is as follows. Catalyzes the condensation of the acetyl group of acetyl-CoA with 3-methyl-2-oxobutanoate (2-ketoisovalerate) to form 3-carboxy-3-hydroxy-4-methylpentanoate (2-isopropylmalate). This chain is 2-isopropylmalate synthase, found in Shewanella woodyi (strain ATCC 51908 / MS32).